We begin with the raw amino-acid sequence, 565 residues long: MARIRVLDADTVSRIAAGEVVERPAAVVKELVENALDAGARVVHIDIAAGGLERITVTDDGCGMEPGDAELALQRHATSKITAAEDLEAVRTLGFRGEALPSIAAVSRLTLRTRPAASSAGTVLETEGGLVLSAGVSGGPPGTVVTVRDLFFNTPARKKFVRSAAHEGAMISEMVGRLALSRPEVAFRLTVNGRQVLATSGSGDLLDAIGAVFGAAVAREMVPVRFEERGLGVSGYVGRPGVSRSSRRHQVFFVNGRYIRSAYLGAAAEESLHGAMPAGRHAVLVLHLSVEPGMVDVNVHPAKHEVRFSQPRDVYVVVHRAVREALHREIQIPVEECGHLESACFPGAGTGFRIPVQVTFQGGEPELREESTGYQGFPQLQPLGFLPPAYILAGGADGLYILDQHAAHERVLFEQYLRTLEQSAGKQLLVPVMVEIRGREAQTLEDYGPFLRQAGFEVDPFGEGAYLIRTVPSFLRPGAEAVLLTDVLDRLAGERPVDADAFRRVVAAVLACHRAVRGGDKPAGPEAAALLTDLGRCAEPYLCPHGRPTLIRIGFPELARRFQRE.

The protein belongs to the DNA mismatch repair MutL/HexB family.

Functionally, this protein is involved in the repair of mismatches in DNA. It is required for dam-dependent methyl-directed DNA mismatch repair. May act as a 'molecular matchmaker', a protein that promotes the formation of a stable complex between two or more DNA-binding proteins in an ATP-dependent manner without itself being part of a final effector complex. This is DNA mismatch repair protein MutL from Desulforudis audaxviator (strain MP104C).